The following is a 485-amino-acid chain: Adenosylhomocysteinase (485 aa).

T64, D139, and E205 together coordinate substrate. T206 to T208 lines the NAD(+) pocket. Substrate-binding residues include K235 and D239. NAD(+) is bound by residues N240, G269–G274, E292, N327, I348–H350, and N397.

It belongs to the adenosylhomocysteinase family. As to quaternary structure, homotetramer. It depends on NAD(+) as a cofactor.

It catalyses the reaction S-adenosyl-L-homocysteine + H2O = L-homocysteine + adenosine. The protein operates within amino-acid biosynthesis; L-homocysteine biosynthesis; L-homocysteine from S-adenosyl-L-homocysteine: step 1/1. Its function is as follows. Adenosylhomocysteine is a competitive inhibitor of S-adenosyl-L-methionine-dependent methyl transferase reactions; therefore adenosylhomocysteinase may play a key role in the control of methylations via regulation of the intracellular concentration of adenosylhomocysteine. The sequence is that of Adenosylhomocysteinase (SAHH) from Catharanthus roseus (Madagascar periwinkle).